We begin with the raw amino-acid sequence, 111 residues long: Nucleoid-associated protein Cphamn1_1179 (111 aa).

The protein belongs to the YbaB/EbfC family. Homodimer.

The protein resides in the cytoplasm. The protein localises to the nucleoid. Its function is as follows. Binds to DNA and alters its conformation. May be involved in regulation of gene expression, nucleoid organization and DNA protection. This is Nucleoid-associated protein Cphamn1_1179 from Chlorobium phaeobacteroides (strain BS1).